The primary structure comprises 204 residues: Large ribosomal subunit protein eL15 (204 aa).

Belongs to the eukaryotic ribosomal protein eL15 family. In terms of assembly, component of the large ribosomal subunit.

The protein localises to the cytoplasm. Functionally, component of the large ribosomal subunit. The ribosome is a large ribonucleoprotein complex responsible for the synthesis of proteins in the cell. This chain is Large ribosomal subunit protein eL15 (rpl15), found in Tachysurus fulvidraco (Yellow catfish).